A 189-amino-acid polypeptide reads, in one-letter code: Molybdopterin synthase catalytic subunit (189 aa).

Residue Ser20 is modified to Phosphoserine. Residues His143–Arg144, Lys159, and Lys166–Glu168 each bind substrate.

This sequence belongs to the MoaE family. MOCS2B subfamily. As to quaternary structure, heterotetramer; composed of 2 small (MOCS2A) and 2 large (MOCS2B) subunits.

It is found in the cytoplasm. Its subcellular location is the cytosol. The enzyme catalyses 2 [molybdopterin-synthase sulfur-carrier protein]-C-terminal-Gly-aminoethanethioate + cyclic pyranopterin phosphate + H2O = molybdopterin + 2 [molybdopterin-synthase sulfur-carrier protein]-C-terminal Gly-Gly + 2 H(+). The protein operates within cofactor biosynthesis; molybdopterin biosynthesis. In terms of biological role, catalytic subunit of the molybdopterin synthase complex, a complex that catalyzes the conversion of precursor Z into molybdopterin. Acts by mediating the incorporation of 2 sulfur atoms from thiocarboxylated MOCS2A into precursor Z to generate a dithiolene group. This is Molybdopterin synthase catalytic subunit from Bos taurus (Bovine).